The following is a 385-amino-acid chain: Multidrug resistance protein MdtE (385 aa).

An N-terminal signal peptide occupies residues 1 to 20 (MNRRRKLLIPLLFCGAMLTA). A lipid anchor (N-palmitoyl cysteine) is attached at Cys-21. A lipid anchor (S-diacylglycerol cysteine) is attached at Cys-21.

The protein belongs to the membrane fusion protein (MFP) (TC 8.A.1) family. In terms of assembly, homotrimer. Part of the tripartite efflux system MdtEF-TolC, which is composed of an inner membrane transporter, MdtF, a membrane fusion protein, MdtE, and an outer membrane component, TolC. The complex forms a large protein conduit and can translocate molecules across both the inner and outer membranes.

It is found in the cell inner membrane. In terms of biological role, part of the tripartite efflux system MdtEF-TolC, which confers resistance to various compounds. This Escherichia coli O157:H7 protein is Multidrug resistance protein MdtE (mdtE).